A 102-amino-acid chain; its full sequence is ATP-dependent Clp protease adapter protein ClpS (102 aa).

This sequence belongs to the ClpS family. Binds to the N-terminal domain of the chaperone ClpA.

Its function is as follows. Involved in the modulation of the specificity of the ClpAP-mediated ATP-dependent protein degradation. The sequence is that of ATP-dependent Clp protease adapter protein ClpS from Shewanella halifaxensis (strain HAW-EB4).